The sequence spans 78 residues: Small ribosomal subunit protein bS16c (78 aa).

Belongs to the bacterial ribosomal protein bS16 family.

It is found in the plastid. Its subcellular location is the chloroplast. This is Small ribosomal subunit protein bS16c from Adiantum capillus-veneris (Maidenhair fern).